The chain runs to 547 residues: ATP synthase subunit alpha (547 aa).

173–180 (GDRATGKT) is a binding site for ATP. The tract at residues 526–547 (PEAEALADEDVEQEQIVRQKRG) is disordered. Residues 528–538 (AEALADEDVEQ) are compositionally biased toward acidic residues.

This sequence belongs to the ATPase alpha/beta chains family. In terms of assembly, F-type ATPases have 2 components, CF(1) - the catalytic core - and CF(0) - the membrane proton channel. CF(1) has five subunits: alpha(3), beta(3), gamma(1), delta(1), epsilon(1). CF(0) has three main subunits: a(1), b(2) and c(9-12). The alpha and beta chains form an alternating ring which encloses part of the gamma chain. CF(1) is attached to CF(0) by a central stalk formed by the gamma and epsilon chains, while a peripheral stalk is formed by the delta and b chains.

It localises to the cell membrane. The catalysed reaction is ATP + H2O + 4 H(+)(in) = ADP + phosphate + 5 H(+)(out). Functionally, produces ATP from ADP in the presence of a proton gradient across the membrane. The alpha chain is a regulatory subunit. The sequence is that of ATP synthase subunit alpha from Nocardioides sp. (strain ATCC BAA-499 / JS614).